The following is a 21-amino-acid chain: Large ribosomal subunit protein uL30 (21 aa).

The span at 1 to 15 shows a compositional bias: polar residues; sequence AKTENKTVTVRQTAS. The disordered stretch occupies residues 1–21; sequence AKTENKTVTVRQTASPIXXXK.

This sequence belongs to the universal ribosomal protein uL30 family. As to quaternary structure, part of the 50S ribosomal subunit.

The chain is Large ribosomal subunit protein uL30 (rpmD) from Brevundimonas diminuta (Pseudomonas diminuta).